Here is a 146-residue protein sequence, read N- to C-terminus: Transcriptional regulator MraZ (146 aa).

SpoVT-AbrB domains are found at residues 7–54 (NATN…GLDL) and 83–126 (GVFV…QPEA).

Belongs to the MraZ family. As to quaternary structure, forms oligomers.

It localises to the cytoplasm. Its subcellular location is the nucleoid. The chain is Transcriptional regulator MraZ from Rhizobium rhizogenes (strain K84 / ATCC BAA-868) (Agrobacterium radiobacter).